The chain runs to 252 residues: Large ribosomal subunit protein uL4 (252 aa).

The protein belongs to the universal ribosomal protein uL4 family. Part of the 50S ribosomal subunit.

Functionally, one of the primary rRNA binding proteins, this protein initially binds near the 5'-end of the 23S rRNA. It is important during the early stages of 50S assembly. It makes multiple contacts with different domains of the 23S rRNA in the assembled 50S subunit and ribosome. Its function is as follows. Forms part of the polypeptide exit tunnel. The polypeptide is Large ribosomal subunit protein uL4 (Methanococcus vannielii (strain ATCC 35089 / DSM 1224 / JCM 13029 / OCM 148 / SB)).